Consider the following 118-residue polypeptide: Large ribosomal subunit protein bL19 (118 aa).

The protein belongs to the bacterial ribosomal protein bL19 family.

In terms of biological role, this protein is located at the 30S-50S ribosomal subunit interface and may play a role in the structure and function of the aminoacyl-tRNA binding site. In Frankia casuarinae (strain DSM 45818 / CECT 9043 / HFP020203 / CcI3), this protein is Large ribosomal subunit protein bL19.